Reading from the N-terminus, the 332-residue chain is Flotillin-like protein FloA (332 aa).

A helical membrane pass occupies residues 9 to 29 (FILIGGGIIFVVLFFHYVPFF).

Belongs to the flotillin-like FloA family. As to quaternary structure, homooligomerizes.

The protein localises to the cell membrane. The protein resides in the membrane raft. In terms of biological role, found in functional membrane microdomains (FMM) that may be equivalent to eukaryotic membrane rafts. FMMs are highly dynamic and increase in number as cells age. Flotillins are thought to be important factors in membrane fluidity. This chain is Flotillin-like protein FloA, found in Phocaeicola vulgatus (strain ATCC 8482 / DSM 1447 / JCM 5826 / CCUG 4940 / NBRC 14291 / NCTC 11154) (Bacteroides vulgatus).